Consider the following 274-residue polypeptide: Large ribosomal subunit protein uL2 (274 aa).

The tract at residues 214 to 274 (LGRRPRTRPV…NKYIVERRKK (61 aa)) is disordered.

Belongs to the universal ribosomal protein uL2 family. In terms of assembly, part of the 50S ribosomal subunit. Forms a bridge to the 30S subunit in the 70S ribosome.

Functionally, one of the primary rRNA binding proteins. Required for association of the 30S and 50S subunits to form the 70S ribosome, for tRNA binding and peptide bond formation. It has been suggested to have peptidyltransferase activity; this is somewhat controversial. Makes several contacts with the 16S rRNA in the 70S ribosome. This is Large ribosomal subunit protein uL2 from Flavobacterium johnsoniae (strain ATCC 17061 / DSM 2064 / JCM 8514 / BCRC 14874 / CCUG 350202 / NBRC 14942 / NCIMB 11054 / UW101) (Cytophaga johnsonae).